The primary structure comprises 329 residues: Tagatose 1,6-diphosphate aldolase 2 (329 aa).

Belongs to the aldolase LacD family.

It catalyses the reaction D-tagatofuranose 1,6-bisphosphate = D-glyceraldehyde 3-phosphate + dihydroxyacetone phosphate. Its pathway is carbohydrate metabolism; D-tagatose 6-phosphate degradation; D-glyceraldehyde 3-phosphate and glycerone phosphate from D-tagatose 6-phosphate: step 2/2. The sequence is that of Tagatose 1,6-diphosphate aldolase 2 (lacD2) from Streptococcus mutans serotype c (strain ATCC 700610 / UA159).